Here is a 238-residue protein sequence, read N- to C-terminus: Tyrosine recombinase XerD-like (238 aa).

Residues M1–Y75 form the Core-binding (CB) domain. Positions V90–R238 constitute a Tyr recombinase domain. Residues K154 and R204 contribute to the active site. The O-(3'-phospho-DNA)-tyrosine intermediate role is filled by Y236.

This sequence belongs to the 'phage' integrase family. XerD-like subfamily.

It is found in the cytoplasm. Its function is as follows. Putative tyrosine recombinase. Not involved in the cutting and rejoining of the recombining DNA molecules on dif(SL) site. This chain is Tyrosine recombinase XerD-like, found in Lactococcus lactis subsp. cremoris (strain SK11).